Here is a 117-residue protein sequence, read N- to C-terminus: Immunoglobulin lambda variable 1-47 (117 aa).

The first 19 residues, 1–19, serve as a signal peptide directing secretion; it reads MAGFPLLLTLLTHCAGSWA. Gln-20 is subject to Pyrrolidone carboxylic acid. Residues 20-44 form a framework-1 region; sequence QSVLTQPPSASGTPGQRVTISCSGS. The region spanning 20–117 is the Ig-like domain; that stretch reads QSVLTQPPSA…CAAWDDSLSG (98 aa). Cys-41 and Cys-108 are oxidised to a cystine. A complementarity-determining-1 region spans residues 45 to 52; sequence SSNIGSNY. The interval 53 to 69 is framework-2; sequence VYWYQQLPGTAPKLLIY. The tract at residues 70–72 is complementarity-determining-2; it reads SNN. The tract at residues 73-108 is framework-3; it reads QRPSGVPDRFSGSKSGTSASLAISGLRSEDEADYYC. The segment at 109–117 is complementarity-determining-3; sequence AAWDDSLSG.

In terms of assembly, immunoglobulins are composed of two identical heavy chains and two identical light chains; disulfide-linked.

The protein localises to the secreted. It is found in the cell membrane. Functionally, v region of the variable domain of immunoglobulin light chains that participates in the antigen recognition. Immunoglobulins, also known as antibodies, are membrane-bound or secreted glycoproteins produced by B lymphocytes. In the recognition phase of humoral immunity, the membrane-bound immunoglobulins serve as receptors which, upon binding of a specific antigen, trigger the clonal expansion and differentiation of B lymphocytes into immunoglobulins-secreting plasma cells. Secreted immunoglobulins mediate the effector phase of humoral immunity, which results in the elimination of bound antigens. The antigen binding site is formed by the variable domain of one heavy chain, together with that of its associated light chain. Thus, each immunoglobulin has two antigen binding sites with remarkable affinity for a particular antigen. The variable domains are assembled by a process called V-(D)-J rearrangement and can then be subjected to somatic hypermutations which, after exposure to antigen and selection, allow affinity maturation for a particular antigen. The chain is Immunoglobulin lambda variable 1-47 from Homo sapiens (Human).